The following is a 247-amino-acid chain: 3-deoxy-manno-octulosonate cytidylyltransferase (247 aa).

The protein belongs to the KdsB family.

It is found in the cytoplasm. The enzyme catalyses 3-deoxy-alpha-D-manno-oct-2-ulosonate + CTP = CMP-3-deoxy-beta-D-manno-octulosonate + diphosphate. Its pathway is nucleotide-sugar biosynthesis; CMP-3-deoxy-D-manno-octulosonate biosynthesis; CMP-3-deoxy-D-manno-octulosonate from 3-deoxy-D-manno-octulosonate and CTP: step 1/1. It functions in the pathway bacterial outer membrane biogenesis; lipopolysaccharide biosynthesis. Functionally, activates KDO (a required 8-carbon sugar) for incorporation into bacterial lipopolysaccharide in Gram-negative bacteria. This Chlorobium phaeovibrioides (strain DSM 265 / 1930) (Prosthecochloris vibrioformis (strain DSM 265)) protein is 3-deoxy-manno-octulosonate cytidylyltransferase.